Reading from the N-terminus, the 131-residue chain is Aspartate 1-decarboxylase (131 aa).

Catalysis depends on S25, which acts as the Schiff-base intermediate with substrate; via pyruvic acid. S25 carries the pyruvic acid (Ser) modification. Residue T57 participates in substrate binding. Y58 functions as the Proton donor in the catalytic mechanism. Residue 73-75 (GAA) participates in substrate binding.

The protein belongs to the PanD family. In terms of assembly, heterooctamer of four alpha and four beta subunits. It depends on pyruvate as a cofactor. Is synthesized initially as an inactive proenzyme, which is activated by self-cleavage at a specific serine bond to produce a beta-subunit with a hydroxyl group at its C-terminus and an alpha-subunit with a pyruvoyl group at its N-terminus.

It localises to the cytoplasm. The catalysed reaction is L-aspartate + H(+) = beta-alanine + CO2. The protein operates within cofactor biosynthesis; (R)-pantothenate biosynthesis; beta-alanine from L-aspartate: step 1/1. Its function is as follows. Catalyzes the pyruvoyl-dependent decarboxylation of aspartate to produce beta-alanine. This is Aspartate 1-decarboxylase from Anaeromyxobacter sp. (strain Fw109-5).